The following is a 95-amino-acid chain: Small ribosomal subunit protein bS6 (95 aa).

This sequence belongs to the bacterial ribosomal protein bS6 family.

Its function is as follows. Binds together with bS18 to 16S ribosomal RNA. This is Small ribosomal subunit protein bS6 from Onion yellows phytoplasma (strain OY-M).